The primary structure comprises 88 residues: Small integral membrane protein 13 (88 aa).

Residues 10–30 (LVFVATLLIVLLLMVCGWYFV) traverse the membrane as a helical segment. Positions 48–60 (TGSQEGDNEQPSG) are enriched in polar residues. A disordered region spans residues 48-88 (TGSQEGDNEQPSGSEAEEDPSASPHKMRSARQRRPPVDDGH). Phosphoserine occurs at positions 59, 61, and 70. Over residues 72–81 (HKMRSARQRR) the composition is skewed to basic residues.

Belongs to the SMIM13 family.

It localises to the membrane. This chain is Small integral membrane protein 13 (Smim13), found in Rattus norvegicus (Rat).